The sequence spans 636 residues: MNDWTIEDARAGYNVTHWSQGFYGIGEAGEVTVSPDPLNPSNKVALDTLAQDLVQAGIALPVLVRFPQILHHRVESLCDAFNQAIQKYEYQNDYLLVYPIKVNQQKTVVEEILASQVSKEVPQLGLEAGSKPELMAVLAMAQKASSVIVCNGYKDKEYVRLALIGEKLGHKVYIVLEKMSELKMVLEEARELGVTPRLGLRTRLAFQGKGKWQASGGEKSKFGLSAAQVLKVVDELKEANMLESLQLLHFHLGSQIANIRDIRQGVSEAGRFYCELRQLGASINCFDVGGGLAVDYDGTRSQSNNSMNYGLTEYANNIVNVLTDLCNEYEQPMPRIISESGRHLTAHHAVLITDVIGTEAYMPENIQAPAEDAPQLLHNMWQSWTEISGRHDQRAIIEIYHDSQSDIAEAHSLFAVGQLSLMDRAWAEQTNLRVCHEVKGLLSNNNRYHRPVIDELNEKLADKLFVNFSLFQSLPDAWGIDQVFPVLPLTCLDKAPERRAVMLDITCDSDGIVDQYVDGQGIETTLPVPAWDPANPYLIGFFMVGAYQEILGDMHNLFGDTNSAVVFVEDNGKARIESTLDGDTVADVLRYVNLDADEFMHTYEELVEQHIVEDERASILEELQLGLKGYTYLEDF.

Lys101 bears the N6-(pyridoxal phosphate)lysine mark. 286–296 is a substrate binding site; the sequence is FDVGGGLAVDY.

The protein belongs to the Orn/Lys/Arg decarboxylase class-II family. SpeA subfamily. Mg(2+) is required as a cofactor. The cofactor is pyridoxal 5'-phosphate.

The enzyme catalyses L-arginine + H(+) = agmatine + CO2. It functions in the pathway amine and polyamine biosynthesis; agmatine biosynthesis; agmatine from L-arginine: step 1/1. In terms of biological role, catalyzes the biosynthesis of agmatine from arginine. In Shewanella denitrificans (strain OS217 / ATCC BAA-1090 / DSM 15013), this protein is Biosynthetic arginine decarboxylase.